The sequence spans 147 residues: Lysozyme C (147 aa).

Positions 1 to 18 are cleaved as a signal peptide; that stretch reads MKVLLLLGFIFCSMAAHG. Residues 19-147 enclose the C-type lysozyme domain; the sequence is KRMERCEFAR…LSKYLEGCHL (129 aa). 4 disulfides stabilise this stretch: C24–C145, C48–C133, C83–C99, and C95–C113. Residues E53 and D71 contribute to the active site.

It belongs to the glycosyl hydrolase 22 family. As to quaternary structure, monomer.

It is found in the secreted. The enzyme catalyses Hydrolysis of (1-&gt;4)-beta-linkages between N-acetylmuramic acid and N-acetyl-D-glucosamine residues in a peptidoglycan and between N-acetyl-D-glucosamine residues in chitodextrins.. Functionally, lysozymes have primarily a bacteriolytic function; those in tissues and body fluids are associated with the monocyte-macrophage system and enhance the activity of immunoagents. The polypeptide is Lysozyme C (LYZ) (Trichosurus vulpecula (Brush-tailed possum)).